The sequence spans 366 residues: Galactoside alpha-(1,2)-fucosyltransferase 1 (366 aa).

Residues 1–8 are Cytoplasmic-facing; sequence MWPLSHRH. Residues 9 to 25 traverse the membrane as a helical; Signal-anchor for type II membrane protein segment; the sequence is LCLAFLLVCVLSAISFF. Residues 26–366 are Lumenal-facing; it reads LHIHQDSFRH…LSPLWTLAEP (341 aa). Residues Asn66, Asn302, and Asn328 are each glycosylated (N-linked (GlcNAc...) asparagine).

Belongs to the glycosyltransferase 11 family.

It is found in the golgi apparatus. The protein localises to the golgi stack membrane. The catalysed reaction is a beta-D-galactosyl-(1-&gt;4)-N-acetyl-beta-D-glucosaminyl derivative + GDP-beta-L-fucose = an alpha-L-Fuc-(1-&gt;2)-beta-D-Gal-(1-&gt;4)-beta-D-GlcNAc derivative + GDP + H(+). It catalyses the reaction a ganglioside GA1 + GDP-beta-L-fucose = a ganglioside Fuc-GA1 + GDP + H(+). It carries out the reaction a beta-D-Gal-(1-&gt;3)-beta-D-GlcNAc-(1-&gt;3)-beta-D-Gal-(1-&gt;4)-beta-D-Glc-(1&lt;-&gt;1')-Cer(d18:1(4E)) + GDP-beta-L-fucose = alpha-L-fucosyl-(1-&gt;2)- beta-D-galactosyl-(1-&gt;3)-N-acetyl-beta-D-glucosaminyl-(1-&gt;3)-beta-D-galactosyl-(1-&gt;4)-beta-D-glucosyl-(1&lt;-&gt;1')-N-acylsphing-4-enine + GDP + H(+). The enzyme catalyses a neolactoside nLc4Cer(d18:1(4E)) + GDP-beta-L-fucose = a neolactoside IV(2)-alpha-Fuc-nLc4Cer(d18:1(4E)) + GDP + H(+). The catalysed reaction is a ganglioside GM1 + GDP-beta-L-fucose = a ganglioside Fuc-GM1 + GDP + H(+). It catalyses the reaction beta-D-galactosyl-(1-&gt;3)-N-acetyl-D-galactosamine + GDP-beta-L-fucose = alpha-L-fucosyl-(1-&gt;2)-beta-D-galactosyl-(1-&gt;3)-N-acetyl-D-galactosamine + GDP + H(+). It functions in the pathway protein modification; protein glycosylation. In terms of biological role, catalyzes the transfer of L-fucose, from a guanosine diphosphate-beta-L-fucose, to the terminal galactose residue of glycoconjugates through an alpha(1,2) linkage leading to H antigen synthesis that is an intermediate substrate in the synthesis of ABO blood group antigens. H antigen is essential for maturation of the glomerular layer of the main olfactory bulb, in cell migration and early cell-cell contacts during tumor associated angiogenesis. Preferentially fucosylates soluble lactose and to a lesser extent fucosylates glycolipids gangliosides GA1 and GM1a. This Ateles belzebuth (White-bellied spider monkey) protein is Galactoside alpha-(1,2)-fucosyltransferase 1.